Here is a 363-residue protein sequence, read N- to C-terminus: Putative replication factor C small subunit L510 (363 aa).

47-54 (GPPGTGKT) lines the ATP pocket.

It belongs to the activator 1 small subunits family. RfcS subfamily.

Its function is as follows. Part of the RFC clamp loader complex which loads the PCNA sliding clamp onto DNA. The protein is Putative replication factor C small subunit L510 of Acanthamoeba polyphaga mimivirus (APMV).